A 483-amino-acid polypeptide reads, in one-letter code: Glutamyl-tRNA(Gln) amidotransferase subunit A (483 aa).

Active-site charge relay system residues include Lys-77 and Ser-152. The Acyl-ester intermediate role is filled by Ser-176.

Belongs to the amidase family. GatA subfamily. In terms of assembly, heterotrimer of A, B and C subunits.

It catalyses the reaction L-glutamyl-tRNA(Gln) + L-glutamine + ATP + H2O = L-glutaminyl-tRNA(Gln) + L-glutamate + ADP + phosphate + H(+). Functionally, allows the formation of correctly charged Gln-tRNA(Gln) through the transamidation of misacylated Glu-tRNA(Gln) in organisms which lack glutaminyl-tRNA synthetase. The reaction takes place in the presence of glutamine and ATP through an activated gamma-phospho-Glu-tRNA(Gln). The protein is Glutamyl-tRNA(Gln) amidotransferase subunit A of Listeria monocytogenes serovar 1/2a (strain ATCC BAA-679 / EGD-e).